Here is a 480-residue protein sequence, read N- to C-terminus: Argininosuccinate lyase (480 aa).

Belongs to the lyase 1 family. Argininosuccinate lyase subfamily.

It localises to the cytoplasm. It catalyses the reaction 2-(N(omega)-L-arginino)succinate = fumarate + L-arginine. The protein operates within amino-acid biosynthesis; L-arginine biosynthesis; L-arginine from L-ornithine and carbamoyl phosphate: step 3/3. In Ruthia magnifica subsp. Calyptogena magnifica, this protein is Argininosuccinate lyase.